Consider the following 368-residue polypeptide: Glutaminyl-peptide cyclotransferase (368 aa).

The signal sequence occupies residues 1 to 23 (MAGERRDSKAAAFFCLAWALCLA). N-linked (GlcNAc...) asparagine glycosylation is present at asparagine 53. Cysteine 143 and cysteine 169 form a disulfide bridge. Aspartate 164 serves as a coordination point for Zn(2+). Residue glutamate 207 is the Proton acceptor of the active site. Glutamate 208 contributes to the Zn(2+) binding site. Aspartate 254 functions as the Proton acceptor in the catalytic mechanism. Asparagine 292 carries an N-linked (GlcNAc...) asparagine glycan. Histidine 336 contributes to the Zn(2+) binding site. Asparagine 352 carries N-linked (GlcNAc...) asparagine glycosylation.

Belongs to the glutaminyl-peptide cyclotransferase family. In terms of tissue distribution, expressed by the venom gland.

It localises to the secreted. It carries out the reaction N-terminal L-glutaminyl-[peptide] = N-terminal 5-oxo-L-prolyl-[peptide] + NH4(+). Responsible for the biosynthesis of pyroglutamyl peptides. Has a bias against acidic and tryptophan residues adjacent to the N-terminal glutaminyl residue and a lack of importance of chain length after the second residue. Also catalyzes N-terminal pyroglutamate formation. The protein is Glutaminyl-peptide cyclotransferase (QPCT) of Boiga irregularis (Brown tree snake).